We begin with the raw amino-acid sequence, 115 residues long: uncharacterized protein (115 aa).

This is an uncharacterized protein from Haemophilus influenzae (strain ATCC 51907 / DSM 11121 / KW20 / Rd).